A 78-amino-acid polypeptide reads, in one-letter code: MSTIEERVKKIIVEQLGVKEDEVVNSASFVDDLGADSLDTVELVMALEEEFDTEIPDEEAEKITTVQAAIDYIEAANK.

The Carrier domain occupies 2 to 77; the sequence is STIEERVKKI…AAIDYIEAAN (76 aa). An O-(pantetheine 4'-phosphoryl)serine modification is found at serine 37.

It belongs to the acyl carrier protein (ACP) family. 4'-phosphopantetheine is transferred from CoA to a specific serine of apo-ACP by AcpS. This modification is essential for activity because fatty acids are bound in thioester linkage to the sulfhydryl of the prosthetic group.

The protein localises to the cytoplasm. It participates in lipid metabolism; fatty acid biosynthesis. Functionally, carrier of the growing fatty acid chain in fatty acid biosynthesis. This Edwardsiella ictaluri (strain 93-146) protein is Acyl carrier protein.